Consider the following 313-residue polypeptide: tRNA dimethylallyltransferase (313 aa).

10-17 (GPTASGKT) contacts ATP. 12–17 (TASGKT) provides a ligand contact to substrate. Interaction with substrate tRNA regions lie at residues 35-38 (DSAM), 159-163 (QRIQR), and 240-245 (RCVGYR).

This sequence belongs to the IPP transferase family. Monomer. Mg(2+) is required as a cofactor.

It catalyses the reaction adenosine(37) in tRNA + dimethylallyl diphosphate = N(6)-dimethylallyladenosine(37) in tRNA + diphosphate. Its function is as follows. Catalyzes the transfer of a dimethylallyl group onto the adenine at position 37 in tRNAs that read codons beginning with uridine, leading to the formation of N6-(dimethylallyl)adenosine (i(6)A). This Legionella pneumophila (strain Paris) protein is tRNA dimethylallyltransferase.